Reading from the N-terminus, the 398-residue chain is DNA-directed RNA polymerase III subunit RPC4 (398 aa).

Residues 1 to 114 form a disordered region; it reads MSEGNAAGEP…SHSIFEQGPA (114 aa). Ser-2 carries the N-acetylserine modification. Ser-42 carries the post-translational modification Phosphoserine. Positions 66–100 are enriched in basic and acidic residues; the sequence is KIKEEPKEEVTVKKEKRERDRDRQREGHGRGRGRP. Glycyl lysine isopeptide (Lys-Gly) (interchain with G-Cter in SUMO2) cross-links involve residues Lys-68 and Lys-78. Arg-95, Arg-97, and Arg-99 each carry omega-N-methylarginine. Glycyl lysine isopeptide (Lys-Gly) (interchain with G-Cter in SUMO2) cross-links involve residues Lys-141, Lys-152, Lys-160, Lys-190, Lys-199, Lys-206, Lys-220, Lys-285, Lys-302, Lys-310, and Lys-396. The tract at residues 220–244 is disordered; that stretch reads KEEPRDEEEEAKMKAPPKAARKTPG.

It belongs to the eukaryotic RPC4/POLR3D RNA polymerase subunit family. In terms of assembly, component of the RNA polymerase III complex consisting of 17 subunits: a ten-subunit horseshoe-shaped catalytic core composed of POLR3A/RPC1, POLR3B/RPC2, POLR1C/RPAC1, POLR1D/RPAC2, POLR3K/RPC10, POLR2E/RPABC1, POLR2F/RPABC2, POLR2H/RPABC3, POLR2K/RPABC4 and POLR2L/RPABC5; a mobile stalk composed of two subunits POLR3H/RPC8 and CRCP/RPC9, protruding from the core and functioning primarily in transcription initiation; and additional subunits homologous to general transcription factors of the RNA polymerase II machinery, POLR3C/RPC3-POLR3F/RPC6-POLR3G/RPC7 heterotrimer required for transcription initiation and POLR3D/RPC4-POLR3E/RPC5 heterodimer involved in both transcription initiation and termination. Sumoylation on Lys-141 can serve as a signal to mark misfolded Pol III for proteasomal degradation.

The protein resides in the nucleus. Its function is as follows. DNA-dependent RNA polymerase catalyzes the transcription of DNA into RNA using the four ribonucleoside triphosphates as substrates. Specific peripheric component of RNA polymerase III (Pol III) which synthesizes small non-coding RNAs including 5S rRNA, snRNAs, tRNAs and miRNAs from at least 500 distinct genomic loci. Assembles with POLR3E/RPC5 forming a subcomplex that binds the Pol III core. Enables recruitment of Pol III at transcription initiation site and drives transcription initiation from both type 2 and type 3 DNA promoters. Required for efficient transcription termination and reinitiation. Pol III plays a key role in sensing and limiting infection by intracellular bacteria and DNA viruses. Acts as nuclear and cytosolic DNA sensor involved in innate immune response. Can sense non-self dsDNA that serves as template for transcription into dsRNA. The non-self RNA polymerase III transcripts, such as Epstein-Barr virus-encoded RNAs (EBERs) induce type I interferon and NF-kappa-B through the RIG-I pathway. This Homo sapiens (Human) protein is DNA-directed RNA polymerase III subunit RPC4.